The chain runs to 376 residues: Putative F-box protein At1g30930 (376 aa).

In terms of domain architecture, F-box spans 1-44 (MKNSIPIDLIIEIVSRSTAKSVARCHCVSKQWRAIFRRKYFIEL).

The chain is Putative F-box protein At1g30930 from Arabidopsis thaliana (Mouse-ear cress).